Here is a 248-residue protein sequence, read N- to C-terminus: PF03932 family protein CutC (248 aa).

It belongs to the CutC family. In terms of assembly, homodimer.

It is found in the cytoplasm. This is PF03932 family protein CutC from Shigella boydii serotype 4 (strain Sb227).